A 418-amino-acid chain; its full sequence is Gamma-glutamyl phosphate reductase (418 aa).

It belongs to the gamma-glutamyl phosphate reductase family.

It localises to the cytoplasm. It catalyses the reaction L-glutamate 5-semialdehyde + phosphate + NADP(+) = L-glutamyl 5-phosphate + NADPH + H(+). The protein operates within amino-acid biosynthesis; L-proline biosynthesis; L-glutamate 5-semialdehyde from L-glutamate: step 2/2. Functionally, catalyzes the NADPH-dependent reduction of L-glutamate 5-phosphate into L-glutamate 5-semialdehyde and phosphate. The product spontaneously undergoes cyclization to form 1-pyrroline-5-carboxylate. In Chlorobium chlorochromatii (strain CaD3), this protein is Gamma-glutamyl phosphate reductase.